The sequence spans 558 residues: Phosphatidylserine lipase ABHD16A (558 aa).

Helical transmembrane passes span 60–80 (ILAL…FAFF) and 93–113 (VVPF…VACL). Over 114-558 (RGIGRWTNPQ…AQHFQMPWHL (445 aa)) the chain is Cytoplasmic. The AB hydrolase-1 domain occupies 281-406 (LVICCEGNAG…ALVTRTVRQH (126 aa)). Active-site charge relay system residues include Ser355, Asp430, and His507.

It belongs to the AB hydrolase superfamily. ABHD16 family.

The protein resides in the membrane. The enzyme catalyses 1-heptadecanoyl-2-(5Z,8Z,11Z,14Z-eicosatetraenoyl)-sn-glycero-3-phosphoserine + H2O = 1-heptadecanoyl-sn-glycero-3-phosphoserine + (5Z,8Z,11Z,14Z)-eicosatetraenoate + H(+). It carries out the reaction 1-hexadecanoyl-2-(9Z-octadecenoyl)-sn-glycero-3-phospho-L-serine + H2O = 1-hexadecanoyl-sn-glycero-3-phospho-L-serine + (9Z)-octadecenoate + H(+). It catalyses the reaction 1-octadecanoyl-2-(9Z,12Z-octadecadienoyl)-sn-glycero-3-phosphoserine + H2O = 1-octadecanoyl-sn-glycero-3-phosphoserine + (9Z,12Z)-octadecadienoate + H(+). The catalysed reaction is 1-heptadecanoyl-2-(5Z,8Z,11Z,14Z-eicosatetraenoyl)-sn-glycero-3-phosphocholine + H2O = 1-heptadecanoyl-sn-glycero-3-phosphocholine + (5Z,8Z,11Z,14Z)-eicosatetraenoate + H(+). The enzyme catalyses 1-hexadecanoyl-2-(9Z-octadecenoyl)-sn-glycero-3-phosphoglycerol + H2O = 1-hexadecanoyl-sn-glycero-3-phosphoglycerol + (9Z)-octadecenoate + H(+). It carries out the reaction 1-hexadecanoyl-2-(9Z-octadecenoyl)-sn-glycero-3-phospho-(1D-myo-inositol) + H2O = 1-hexadecanoyl-sn-glycero-3-phospho-(1D-myo-inositol) + (9Z)-octadecenoate + H(+). It catalyses the reaction 1-heptadecanoyl-2-(5Z,8Z,11Z,14Z-eicosatetraenoyl)-sn-glycero-3-phosphoethanolamine + H2O = 1-heptadecanoyl-sn-glycero-3-phosphoethanolamine + (5Z,8Z,11Z,14Z)-eicosatetraenoate + H(+). The catalysed reaction is 1-hexadecanoyl-2-(9Z-octadecenoyl)-sn-glycero-3-phospho-(1'-sn-glycerol) + H2O = 1-hexadecanoyl-sn-glycero-3-phospho-(1'-sn-glycerol) + (9Z)-octadecenoate + H(+). The enzyme catalyses Hydrolyzes glycerol monoesters of long-chain fatty acids.. It carries out the reaction 1-tetradecanoylglycerol + H2O = tetradecanoate + glycerol + H(+). It catalyses the reaction 2-hexadecanoylglycerol + H2O = glycerol + hexadecanoate + H(+). The catalysed reaction is 1-(9Z-octadecenoyl)-glycerol + H2O = glycerol + (9Z)-octadecenoate + H(+). The enzyme catalyses 2-(9Z-octadecenoyl)-glycerol + H2O = glycerol + (9Z)-octadecenoate + H(+). It carries out the reaction 2-(9Z,12Z-octadecadienoyl)-glycerol + H2O = (9Z,12Z)-octadecadienoate + glycerol + H(+). It catalyses the reaction 1-(5Z,8Z,11Z,14Z-eicosatetraenoyl)-glycerol + H2O = glycerol + (5Z,8Z,11Z,14Z)-eicosatetraenoate + H(+). The catalysed reaction is 2-(5Z,8Z,11Z,14Z-eicosatetraenoyl)-glycerol + H2O = glycerol + (5Z,8Z,11Z,14Z)-eicosatetraenoate + H(+). The enzyme catalyses prostaglandin D2-1-glycerol ester + H2O = prostaglandin D2 + glycerol + H(+). It carries out the reaction 2-glyceryl-15-deoxy-Delta(12,14)-prostaglandin J2 + H2O = 15-deoxy-Delta(12,14)-prostaglandin J2 + glycerol + H(+). It catalyses the reaction 1-(9Z,12Z-octadecadienoyl)-glycerol + H2O = (9Z,12Z)-octadecadienoate + glycerol + H(+). Its activity is regulated as follows. Specifically inhibited by alpha-alkylidene-beta-lactone KC01 ((Z)-6-(2-Oxo-4-tridecyloxetan-3-ylidene)hexanamide). Functionally, phosphatidylserine (PS) lipase that mediates the hydrolysis of phosphatidylserine to generate lysophosphatidylserine (LPS). LPS constitutes a class of signaling lipids that regulates immunological and neurological processes. Has no activity towards diacylglycerol, triacylglycerol or lysophosphatidylserine lipase. Also has monoacylglycerol lipase activity, with preference for 1-(9Z,12Z-octadecadienoyl)-glycerol (1-LG) and 2-glyceryl-15-deoxy-Delta(12,14)-prostaglandin J2 (15d-PGJ(2)-G). This is Phosphatidylserine lipase ABHD16A from Mus musculus (Mouse).